Consider the following 478-residue polypeptide: Aspartyl/glutamyl-tRNA(Asn/Gln) amidotransferase subunit B (478 aa).

Belongs to the GatB/GatE family. GatB subfamily. Heterotrimer of A, B and C subunits.

The catalysed reaction is L-glutamyl-tRNA(Gln) + L-glutamine + ATP + H2O = L-glutaminyl-tRNA(Gln) + L-glutamate + ADP + phosphate + H(+). The enzyme catalyses L-aspartyl-tRNA(Asn) + L-glutamine + ATP + H2O = L-asparaginyl-tRNA(Asn) + L-glutamate + ADP + phosphate + 2 H(+). Allows the formation of correctly charged Asn-tRNA(Asn) or Gln-tRNA(Gln) through the transamidation of misacylated Asp-tRNA(Asn) or Glu-tRNA(Gln) in organisms which lack either or both of asparaginyl-tRNA or glutaminyl-tRNA synthetases. The reaction takes place in the presence of glutamine and ATP through an activated phospho-Asp-tRNA(Asn) or phospho-Glu-tRNA(Gln). This Pseudothermotoga lettingae (strain ATCC BAA-301 / DSM 14385 / NBRC 107922 / TMO) (Thermotoga lettingae) protein is Aspartyl/glutamyl-tRNA(Asn/Gln) amidotransferase subunit B.